The sequence spans 176 residues: ATP-dependent protease subunit HslV (176 aa).

Residue Thr-6 is part of the active site. Gly-161, Cys-164, and Thr-167 together coordinate Na(+).

The protein belongs to the peptidase T1B family. HslV subfamily. A double ring-shaped homohexamer of HslV is capped on each side by a ring-shaped HslU homohexamer. The assembly of the HslU/HslV complex is dependent on binding of ATP.

Its subcellular location is the cytoplasm. It catalyses the reaction ATP-dependent cleavage of peptide bonds with broad specificity.. Its activity is regulated as follows. Allosterically activated by HslU binding. Its function is as follows. Protease subunit of a proteasome-like degradation complex believed to be a general protein degrading machinery. This is ATP-dependent protease subunit HslV from Thermotoga sp. (strain RQ2).